A 160-amino-acid polypeptide reads, in one-letter code: Small ribosomal subunit protein bS6 (160 aa).

Composition is skewed to basic and acidic residues over residues 94-119 and 125-152; these read EEHE…RGGR and RGDR…REDA. The segment at 94–160 is disordered; sequence EEHEEGPSAM…DADTAAASEE (67 aa).

This sequence belongs to the bacterial ribosomal protein bS6 family.

Its function is as follows. Binds together with bS18 to 16S ribosomal RNA. The polypeptide is Small ribosomal subunit protein bS6 (Rhodopseudomonas palustris (strain BisB5)).